Reading from the N-terminus, the 2032-residue chain is Cytoskeleton-associated protein 5 (2032 aa).

3 TOG regions span residues 1–223 (MGDD…KLPT), 268–502 (YELL…LVHG), and 588–817 (SIEV…GQSP). At Lys-48 the chain carries N6-acetyllysine. 3 HEAT repeats span residues 159 to 197 (IISL…WNRD), 356 to 394 (GQYA…TTTL), and 434 to 472 (KSLL…VVGE). Residues 501-579 (HGKKSGLATE…GTKNKKGLET (79 aa)) are disordered. The stretch at 750-788 (ELNVKAFISNVKTALAATNPAVRTSAITLLGVMYLYVGP) is one HEAT 4 repeat. The interval 811 to 848 (KMQGQSPPAPTRGIAKHSTSATDEGEDGEEPGEGGNDV) is disordered. A Phosphoserine modification is found at Ser-816. A compositionally biased stretch (acidic residues) spans 833–842 (DEGEDGEEPG). 2 TOG regions span residues 853–1081 (PRIE…ANMP) and 1193–1428 (IEQL…KRPS). HEAT repeat units follow at residues 855 to 893 (IEIS…EAKF), 936 to 974 (RQHV…QTGM), and 1013 to 1051 (PTDL…HLGY). The segment covering 1078 to 1095 (ANMPSKPAAPAKAMSKPM) has biased composition (low complexity). Residues 1078–1156 (ANMPSKPAAP…KTTLKEDDDK (79 aa)) are disordered. HEAT repeat units lie at residues 1284–1322 (ENEA…VYPA), 1324–1357 (KMFP…SYGM), and 1361–1399 (QPTP…VHGD). A disordered region spans residues 1420–1459 (IKRSAKRPSAAPVKQAEEKPQRTQNINSNANMLRKGPAED). Residues 1441–1450 (RTQNINSNAN) show a composition bias toward polar residues. Ser-1469 is modified (phosphoserine). The segment at 1801-1822 (SMDQTGSKSDKETEKGASRIDE) is disordered. Over residues 1808 to 1822 (KSDKETEKGASRIDE) the composition is skewed to basic and acidic residues. Position 1861 is a phosphoserine (Ser-1861). Disordered stretches follow at residues 1893-1926 (SKGR…GNTN) and 1948-2032 (LDNT…SSRK). A compositionally biased stretch (low complexity) spans 1909-1921 (VTCVPTPTSTVSS). The segment at 1932 to 1957 (PSVYLERLKILRQRCGLDNTKQDDRP) is interaction with TACC3. Positions 1972 to 1983 (ASSTDMLHSKLS) are enriched in polar residues. Basic and acidic residues predominate over residues 1984–1997 (QLRESREQHQHSDL). Low complexity predominate over residues 2002 to 2015 (THSAGTMTSSSSTT). Residues 2018 to 2032 (DDLKKRLERIKSSRK) are compositionally biased toward basic and acidic residues.

It belongs to the TOG/XMAP215 family. As to quaternary structure, interacts with TACC1. Interacts with HNRNPA2B1. Interacts with TACC3 independently of clathrin. Interacts with TACC3 and clathrin forming the TACC3/ch-TOG/clathrin complex located at spindle inter-microtubules bridges. Interacts with NDC80; indicative for an association with the NDC80 complex. Interacts with SLAIN2. Interacts with SLAIN1.

The protein resides in the cytoplasm. It is found in the cytoskeleton. It localises to the microtubule organizing center. Its subcellular location is the centrosome. The protein localises to the spindle pole. The protein resides in the spindle. It is found in the chromosome. It localises to the centromere. Its subcellular location is the kinetochore. In terms of biological role, binds to the plus end of microtubules and regulates microtubule dynamics and microtubule organization. Acts as a processive microtubule polymerase. Promotes cytoplasmic microtubule nucleation and elongation. Plays a major role in organizing spindle poles. In spindle formation protects kinetochore microtubules from depolymerization by KIF2C and has an essential role in centrosomal microtubule assembly independently of KIF2C activity. Contributes to centrosome integrity. Acts as a component of the TACC3/ch-TOG/clathrin complex proposed to contribute to stabilization of kinetochore fibers of the mitotic spindle by acting as inter-microtubule bridge. The TACC3/ch-TOG/clathrin complex is required for the maintenance of kinetochore fiber tension. Enhances the strength of NDC80 complex-mediated kinetochore-tip microtubule attachments. The protein is Cytoskeleton-associated protein 5 of Mus musculus (Mouse).